Reading from the N-terminus, the 255-residue chain is Electron transfer flavoprotein beta subunit lysine methyltransferase (255 aa).

The transit peptide at 1–32 (MAFSLCWKAPRSPWSFLQAVNNGSPLFLWRTV) directs the protein to the mitochondrion.

It belongs to the methyltransferase superfamily. ETFBKMT family. Interacts with HSPD1; this protein may possibly be a methylation substrate.

Its subcellular location is the cytoplasm. The protein localises to the mitochondrion matrix. The catalysed reaction is L-lysyl-[protein] + 3 S-adenosyl-L-methionine = N(6),N(6),N(6)-trimethyl-L-lysyl-[protein] + 3 S-adenosyl-L-homocysteine + 3 H(+). In terms of biological role, protein-lysine methyltransferase that selectively trimethylates the flavoprotein ETFB in mitochondria. Thereby, may negatively regulate the function of ETFB in electron transfer from Acyl-CoA dehydrogenases. The chain is Electron transfer flavoprotein beta subunit lysine methyltransferase from Mus musculus (Mouse).